The following is a 156-amino-acid chain: Small ribosomal subunit protein uS7 (156 aa).

It belongs to the universal ribosomal protein uS7 family. Part of the 30S ribosomal subunit. Contacts proteins S9 and S11.

One of the primary rRNA binding proteins, it binds directly to 16S rRNA where it nucleates assembly of the head domain of the 30S subunit. Is located at the subunit interface close to the decoding center, probably blocks exit of the E-site tRNA. This is Small ribosomal subunit protein uS7 from Pseudomonas syringae pv. syringae (strain B728a).